The chain runs to 624 residues: MASCFHPSAMATSHREEDSIILFSASNSPDEFSSASSSFSSSPLPTPNRYSLTVTNLSYTINHTPILNSVSLAAESSKILAVVGPSGTGKSTLLKIISGRVNHKALDPSSAVLMNNRKITDYNQLRRLCGFVPQDDDLLPLLTVKETLMYSAKFSLRDSTAKEREERVESLLSDLGLVLVQDSFVGEGDEEDRGVSGGERKRVSIAVEMIRDPPILLLDEPTSGLDSRNSLQVVELLATMAKSKQRTVLFSIHQPSYRILDYISDYLILSRGSVIHLGSLEHLEDSIAKLGFQIPEQLNPIEFAMEIVESLRTFKPNSVAVVESSSMWPENNENDGIISKKEAFRVLDVTEISYLCSRFCKIIYRTKQLFLARTMQAVVAGLGLGSVYTRLKRDEEGVAERLGLFAFSLSFLLSSTVEALPIYLRERRVLMKESSRGSYRISSYMIANTIAFVPFLFVVSLLFSIPVYWIVGLNPSIQAFSFFVLCVWLIILMASSLVLFLSAVSPDFISGNSLICTVLGAFFLFSGYFIPKEKIPKPWMFMYYVSLYRYPLESMVVNEYWSMREECFSSGNMGCLMTGEDVLKERGLDKDTRWINVGIMLAFFVFYRILCWGILLRKASKSTH.

The ABC transporter domain occupies 52-296 (LTVTNLSYTI…IAKLGFQIPE (245 aa)). 84 to 91 (GPSGTGKS) lines the ATP pocket. An ABC transmembrane type-2 domain is found at 350 to 560 (TEISYLCSRF…PLESMVVNEY (211 aa)). A run of 6 helical transmembrane segments spans residues 369-389 (LFLA…SVYT), 402-422 (LGLF…ALPI), 450-470 (IAFV…VYWI), 480-500 (FSFF…LVLF), 511-531 (GNSL…YFIP), and 595-615 (INVG…WGIL).

The protein belongs to the ABC transporter superfamily. ABCG family. Eye pigment precursor importer (TC 3.A.1.204) subfamily.

The protein localises to the membrane. The protein is ABC transporter G family member 23 (ABCG23) of Arabidopsis thaliana (Mouse-ear cress).